The following is a 218-amino-acid chain: Thymidylate kinase (218 aa).

15-22 (GLDRSGKS) lines the ATP pocket.

Belongs to the thymidylate kinase family.

It carries out the reaction dTMP + ATP = dTDP + ADP. It functions in the pathway pyrimidine metabolism; dTTP biosynthesis. Functionally, catalyzes the conversion of dTMP to dTDP. This Caenorhabditis elegans protein is Thymidylate kinase.